We begin with the raw amino-acid sequence, 119 residues long: Large ribosomal subunit protein uL18 (119 aa).

The interval 1–24 (MITKQDKNQVRKKRHARVRSKISG) is disordered. The segment covering 10–20 (VRKKRHARVRS) has biased composition (basic residues).

It belongs to the universal ribosomal protein uL18 family. In terms of assembly, part of the 50S ribosomal subunit; part of the 5S rRNA/L5/L18/L25 subcomplex. Contacts the 5S and 23S rRNAs.

This is one of the proteins that bind and probably mediate the attachment of the 5S RNA into the large ribosomal subunit, where it forms part of the central protuberance. This is Large ribosomal subunit protein uL18 from Lysinibacillus sphaericus (strain C3-41).